Reading from the N-terminus, the 470-residue chain is Cell division protein FtsP (470 aa).

Residues 1–27 (MSFSRRQFLQASGIALCAGAIPLRANA) constitute a signal peptide (tat-type signal). In terms of domain architecture, Plastocyanin-like spans 222–287 (VEVSRGWVRL…RREILVDMTN (66 aa)).

Belongs to the FtsP family. Post-translationally, predicted to be exported by the Tat system. The position of the signal peptide cleavage has not been experimentally proven.

It localises to the periplasm. Functionally, cell division protein that is required for growth during stress conditions. May be involved in protecting or stabilizing the divisomal assembly under conditions of stress. The polypeptide is Cell division protein FtsP (Salmonella typhi).